The chain runs to 251 residues: Zinc import ATP-binding protein ZnuC (251 aa).

One can recognise an ABC transporter domain in the interval 5–220 (VSLENVSVSF…PEFISMFGPR (216 aa)). 37 to 44 (GPNGAGKS) is a binding site for ATP.

This sequence belongs to the ABC transporter superfamily. Zinc importer (TC 3.A.1.15.5) family. As to quaternary structure, the complex is composed of two ATP-binding proteins (ZnuC), two transmembrane proteins (ZnuB) and a solute-binding protein (ZnuA).

The protein localises to the cell inner membrane. It catalyses the reaction Zn(2+)(out) + ATP(in) + H2O(in) = Zn(2+)(in) + ADP(in) + phosphate(in) + H(+)(in). In terms of biological role, part of the ABC transporter complex ZnuABC involved in zinc import. Responsible for energy coupling to the transport system. Seems to be important for the virulence. This Salmonella typhimurium (strain LT2 / SGSC1412 / ATCC 700720) protein is Zinc import ATP-binding protein ZnuC.